The chain runs to 392 residues: O-phospho-L-seryl-tRNA:Cys-tRNA synthase 2 (392 aa).

Pyridoxal 5'-phosphate-binding positions include 85–86 (AR), N190, and 213–215 (SGH). An N6-(pyridoxal phosphate)lysine modification is found at K216.

The protein belongs to the SepCysS family. Homodimer. Interacts with SepRS. Pyridoxal 5'-phosphate serves as cofactor.

The enzyme catalyses O-phospho-L-seryl-tRNA(Cys) + hydrogen sulfide + H(+) = L-cysteinyl-tRNA(Cys) + phosphate. In terms of biological role, converts O-phospho-L-seryl-tRNA(Cys) (Sep-tRNA(Cys)) to L-cysteinyl-tRNA(Cys) (Cys-tRNA(Cys)). In Methanocorpusculum labreanum (strain ATCC 43576 / DSM 4855 / Z), this protein is O-phospho-L-seryl-tRNA:Cys-tRNA synthase 2.